We begin with the raw amino-acid sequence, 1194 residues long: IQ motif and SEC7 domain-containing protein 3 (1194 aa).

The stretch at 20–56 (AIVQNQQSLIHTQRQRIDELERRLDELSAENRSLWEH) forms a coiled coil. 2 disordered regions span residues 62–149 (AQPP…EKER) and 229–272 (GRPS…QQPA). Pro residues predominate over residues 63 to 78 (QPPPGLVPPPSAPLPA). Residues 79–92 (PAATAPAATAAQEP) are compositionally biased toward low complexity. The segment covering 122–133 (PSSRVQTPQSPH) has biased composition (polar residues). Ser255 is subject to Phosphoserine. In terms of domain architecture, IQ spans 311 to 340 (SRRAACTIQTAFRQYQLSKNFEKIRNSLLE). 2 disordered regions span residues 439–471 (SAGQ…QGHS) and 515–610 (PAAV…KSAK). Composition is skewed to low complexity over residues 561–572 (VAEAVVEEAVAT) and 600–610 (SSSSASTKSAK). An SEC7 domain is found at 646 to 839 (TLSTDTLRKR…VGIYERIQQK (194 aa)). One can recognise a PH domain in the interval 852 to 985 (TKVEKSIVGM…LKESIAEVTE (134 aa)). 2 disordered regions span residues 1002-1099 (KTLS…PTPP) and 1137-1175 (SSDS…HQFC). Residues 1024 to 1035 (AKREAMAGEKAT) show a composition bias toward basic and acidic residues. Polar residues predominate over residues 1036–1052 (ESSGEVSIHNRLQTFQH). 2 stretches are compositionally biased toward pro residues: residues 1064–1099 (APSP…PTPP) and 1159–1169 (PPLPPPPPPYN).

The protein belongs to the BRAG family. As to quaternary structure, interacts with DLG1 and DLG4. Interacts with GPHN. As to expression, expressed in brain. Localized to dendrites, as well as somas of neuronal cells.

It localises to the cytoplasm. Its subcellular location is the postsynaptic density. Its function is as follows. Acts as a guanine nucleotide exchange factor (GEF) for ARF1. This Rattus norvegicus (Rat) protein is IQ motif and SEC7 domain-containing protein 3 (Iqsec3).